Here is an 829-residue protein sequence, read N- to C-terminus: DNA ligase (829 aa).

The interval 1–23 (MPAQTSRARPVEEMTAAQAREAH) is disordered. Residues 47 to 51 (DAEYD), 96 to 97 (SL), and E130 contribute to the NAD(+) site. The active-site N6-AMP-lysine intermediate is the K132. NAD(+)-binding residues include R153, E190, K306, and K330. The Zn(2+) site is built by C453, C456, C477, and C483. The BRCT domain occupies 750–829 (AAAAVFSGQT…AEWLAMVEAA (80 aa)).

Belongs to the NAD-dependent DNA ligase family. LigA subfamily. Mg(2+) is required as a cofactor. The cofactor is Mn(2+).

The catalysed reaction is NAD(+) + (deoxyribonucleotide)n-3'-hydroxyl + 5'-phospho-(deoxyribonucleotide)m = (deoxyribonucleotide)n+m + AMP + beta-nicotinamide D-nucleotide.. Its function is as follows. DNA ligase that catalyzes the formation of phosphodiester linkages between 5'-phosphoryl and 3'-hydroxyl groups in double-stranded DNA using NAD as a coenzyme and as the energy source for the reaction. It is essential for DNA replication and repair of damaged DNA. This Methylobacterium nodulans (strain LMG 21967 / CNCM I-2342 / ORS 2060) protein is DNA ligase.